A 119-amino-acid chain; its full sequence is Large ribosomal subunit protein bL20 (119 aa).

It belongs to the bacterial ribosomal protein bL20 family.

In terms of biological role, binds directly to 23S ribosomal RNA and is necessary for the in vitro assembly process of the 50S ribosomal subunit. It is not involved in the protein synthesizing functions of that subunit. This is Large ribosomal subunit protein bL20 from Burkholderia cenocepacia (strain HI2424).